A 329-amino-acid chain; its full sequence is Beta-ketoacyl-[acyl-carrier-protein] synthase III (329 aa).

Active-site residues include C113 and H255. The ACP-binding stretch occupies residues 256–260 (QANQR). N285 is a catalytic residue.

It belongs to the thiolase-like superfamily. FabH family. As to quaternary structure, homodimer.

The protein localises to the cytoplasm. The enzyme catalyses malonyl-[ACP] + acetyl-CoA + H(+) = 3-oxobutanoyl-[ACP] + CO2 + CoA. It functions in the pathway lipid metabolism; fatty acid biosynthesis. Catalyzes the condensation reaction of fatty acid synthesis by the addition to an acyl acceptor of two carbons from malonyl-ACP. Catalyzes the first condensation reaction which initiates fatty acid synthesis and may therefore play a role in governing the total rate of fatty acid production. Possesses both acetoacetyl-ACP synthase and acetyl transacylase activities. Its substrate specificity determines the biosynthesis of branched-chain and/or straight-chain of fatty acids. The chain is Beta-ketoacyl-[acyl-carrier-protein] synthase III from Chlorobium phaeobacteroides (strain DSM 266 / SMG 266 / 2430).